The chain runs to 917 residues: Coiled-coil domain-containing protein 186 (917 aa).

Disordered stretches follow at residues 1-52 (MKIR…SGDE), 97-118 (SCANTDTCPEDSGQIDDFPGGD), and 701-769 (TQRR…SVAV). Positions 33 to 44 (TTEKTSELRDDS) are enriched in basic and acidic residues. Residues 220–736 (RYLQQELTVK…TENGNHDKDI (517 aa)) are a coiled coil. Over residues 722–736 (RKLEQTENGNHDKDI) the composition is skewed to basic and acidic residues. Low complexity predominate over residues 737 to 748 (SSMGSRSSSSGS). S759 bears the Phosphoserine mark. Coiled coils occupy residues 778–822 (AMLI…IQSY) and 874–913 (KLQAVLEDTLLKNITLKENLQTLGTEIERLIKHQHELEQR).

Expressed in postnatal germ cells.

The polypeptide is Coiled-coil domain-containing protein 186 (Ccdc186) (Mus musculus (Mouse)).